We begin with the raw amino-acid sequence, 954 residues long: Leucine--tRNA ligase (954 aa).

The short motif at 40 to 51 is the 'HIGH' region element; sequence PYPSGAGLHVGH. Residues 729–733 carry the 'KMSKS' region motif; it reads KMSKS. Residue Lys-732 participates in ATP binding.

Belongs to the class-I aminoacyl-tRNA synthetase family.

Its subcellular location is the cytoplasm. The catalysed reaction is tRNA(Leu) + L-leucine + ATP = L-leucyl-tRNA(Leu) + AMP + diphosphate. This is Leucine--tRNA ligase from Flavobacterium johnsoniae (strain ATCC 17061 / DSM 2064 / JCM 8514 / BCRC 14874 / CCUG 350202 / NBRC 14942 / NCIMB 11054 / UW101) (Cytophaga johnsonae).